A 256-amino-acid polypeptide reads, in one-letter code: Lysine-rich coiled-coil protein 1 (256 aa).

2 disordered regions span residues 62-84 (RLPS…EDRV) and 144-256 (TIDP…ILGF). Over residues 64-79 (PSGTNHSYPRSCSSSQ) the composition is skewed to polar residues. Composition is skewed to basic and acidic residues over residues 161 to 188 (HVEE…DLNK) and 218 to 227 (KTRDVSSKKE). Residues 209-247 (EKLKNRKEKKTRDVSSKKEDRKRRKEKKEQGEERTEEEM) adopt a coiled-coil conformation.

The chain is Lysine-rich coiled-coil protein 1 (Krcc1) from Mus musculus (Mouse).